The primary structure comprises 94 residues: Large ribosomal subunit protein eL33 (94 aa).

This sequence belongs to the eukaryotic ribosomal protein eL33 family.

This Aeropyrum pernix (strain ATCC 700893 / DSM 11879 / JCM 9820 / NBRC 100138 / K1) protein is Large ribosomal subunit protein eL33.